A 124-amino-acid chain; its full sequence is UPF0482 protein YPK_1977 (124 aa).

The first 32 residues, 1–32 (MMKINNLPRLIRAFLPATLLMLPLVWQTPALA), serve as a signal peptide directing secretion. The disordered stretch occupies residues 47-69 (GGNNDPMSKEQARQSQQQWDETN).

The protein belongs to the UPF0482 family.

In Yersinia pseudotuberculosis serotype O:3 (strain YPIII), this protein is UPF0482 protein YPK_1977.